A 331-amino-acid polypeptide reads, in one-letter code: Beta-ketoacyl-[acyl-carrier-protein] synthase III (331 aa).

Catalysis depends on residues cysteine 113 and histidine 253. The interval 254-258 (QANTR) is ACP-binding. The active site involves asparagine 283.

It belongs to the thiolase-like superfamily. FabH family. As to quaternary structure, homodimer.

It localises to the cytoplasm. The enzyme catalyses malonyl-[ACP] + acetyl-CoA + H(+) = 3-oxobutanoyl-[ACP] + CO2 + CoA. It participates in lipid metabolism; fatty acid biosynthesis. Catalyzes the condensation reaction of fatty acid synthesis by the addition to an acyl acceptor of two carbons from malonyl-ACP. Catalyzes the first condensation reaction which initiates fatty acid synthesis and may therefore play a role in governing the total rate of fatty acid production. Possesses both acetoacetyl-ACP synthase and acetyl transacylase activities. Its substrate specificity determines the biosynthesis of branched-chain and/or straight-chain of fatty acids. In Desulfitobacterium hafniense (strain DSM 10664 / DCB-2), this protein is Beta-ketoacyl-[acyl-carrier-protein] synthase III.